Consider the following 95-residue polypeptide: MISVQVIFIAFISIIAFSMVCGGNVFPNRELGILYGCKGYGNAFCDKVCKMHLARGGGRCGEPNPVMWACECIDIDEDNGYFLNALEKQCPLLKG.

An N-terminal signal peptide occupies residues 1-22 (MISVQVIFIAFISIIAFSMVCG). In terms of domain architecture, LCN-type CS-alpha/beta spans 23–91 (GNVFPNRELG…FLNALEKQCP (69 aa)). 3 disulfide bridges follow: C37/C60, C45/C70, and C49/C72.

As to quaternary structure, homodimer; disulfide-linked or monomer (edited version) or heterodimer of an alpha chain (AC P84810) and this beta chain (non-edited version). Expressed by the venom gland.

Its subcellular location is the secreted. Functionally, the homodimer inhibits HMG-CoA reductase (HMGCR) (32% of inhibition produced by 0.6 uM), a glycoprotein involved in the control of cholesterol biosynthesis. The inhibitory effects of bumarsin are seen at much lower concentrations (0.6 uM) than that for statins such as atorvastatin (5 mM) and simvastatin (10 uM). In addition to inhibition of HMG-CoA reductase, this protein lowers cholesterol levels by inducing steroid hormone synthesis via StAR, and by increasing reverse cholesterol transport mediated by the induction of ABCA1 and APOA1. In terms of biological role, the heterodimer non-edited LVP1 induces lipolysis in rat adipocytes. Induction of lipolysis by LVP1 appears to be mediated through the beta-2 adrenergic receptor pathway (ADRB2). Intracerebroventricular injection is not toxic to mice. Its function is as follows. The monomer edited version, similar to alpha-toxins, may modulate voltage-gated sodium channels (Nav) and may block voltage-gated potassium channels (Kv). The protein is Lipolysis-activating peptide 1-beta chain of Buthus occitanus tunetanus (Common European scorpion).